Here is a 419-residue protein sequence, read N- to C-terminus: Putative polyketide beta-ketoacyl synthase 2 (419 aa).

The Ketosynthase family 3 (KS3) domain maps to 10–413 (TRRTAVTGIG…GSNAALVLRP (404 aa)).

It belongs to the thiolase-like superfamily. Beta-ketoacyl-ACP synthases family.

The protein operates within antibiotic biosynthesis; curamycin biosynthesis. This is Putative polyketide beta-ketoacyl synthase 2 (curB) from Streptomyces cyaneus (Streptomyces curacoi).